Consider the following 70-residue polypeptide: Small ribosomal subunit protein bS21 (70 aa).

This sequence belongs to the bacterial ribosomal protein bS21 family.

This Campylobacter hominis (strain ATCC BAA-381 / DSM 21671 / CCUG 45161 / LMG 19568 / NCTC 13146 / CH001A) protein is Small ribosomal subunit protein bS21.